A 98-amino-acid polypeptide reads, in one-letter code: Co-chaperonin GroES (98 aa).

Residues 32-56 are disordered; the sequence is NAKEKPQQGEVLAVGPGRRDDEGKR.

Belongs to the GroES chaperonin family. In terms of assembly, heptamer of 7 subunits arranged in a ring. Interacts with the chaperonin GroEL.

Its subcellular location is the cytoplasm. Together with the chaperonin GroEL, plays an essential role in assisting protein folding. The GroEL-GroES system forms a nano-cage that allows encapsulation of the non-native substrate proteins and provides a physical environment optimized to promote and accelerate protein folding. GroES binds to the apical surface of the GroEL ring, thereby capping the opening of the GroEL channel. This Bifidobacterium animalis subsp. lactis (strain AD011) protein is Co-chaperonin GroES.